We begin with the raw amino-acid sequence, 261 residues long: Pyridoxine-5'-phosphate oxidase (261 aa).

42 to 45 (RGDR) contacts pyridoxal 5'-phosphate. An FMN-binding site is contributed by 95–98 (RMLL). Lys-100 contacts pyridoxal 5'-phosphate. FMN is bound by residues 110 to 111 (FT), 116 to 117 (RK), and Gln-139. Pyridoxal 5'-phosphate contacts are provided by Tyr-157, Arg-161, and Ser-165. FMN is bound by residues 174–175 (QS) and Trp-219. A pyridoxal 5'-phosphate-binding site is contributed by 225–227 (RLH). FMN is bound at residue Arg-229. At Thr-238 the chain carries Phosphothreonine. Ser-241 bears the Phosphoserine mark.

The protein belongs to the pyridoxamine 5'-phosphate oxidase family. In terms of assembly, homodimer. FMN serves as cofactor. As to expression, detected in adult liver.

The catalysed reaction is pyridoxamine 5'-phosphate + O2 + H2O = pyridoxal 5'-phosphate + H2O2 + NH4(+). It catalyses the reaction pyridoxine 5'-phosphate + O2 = pyridoxal 5'-phosphate + H2O2. The protein operates within cofactor metabolism; pyridoxal 5'-phosphate salvage; pyridoxal 5'-phosphate from pyridoxamine 5'-phosphate: step 1/1. It participates in cofactor metabolism; pyridoxal 5'-phosphate salvage; pyridoxal 5'-phosphate from pyridoxine 5'-phosphate: step 1/1. Functionally, catalyzes the oxidation of either pyridoxine 5'-phosphate (PNP) or pyridoxamine 5'-phosphate (PMP) into pyridoxal 5'-phosphate (PLP). The protein is Pyridoxine-5'-phosphate oxidase (Pnpo) of Rattus norvegicus (Rat).